The chain runs to 134 residues: Protein NrdI (134 aa).

Belongs to the NrdI family.

Its function is as follows. Probably involved in ribonucleotide reductase function. This Rhizobium leguminosarum bv. trifolii (strain WSM2304) protein is Protein NrdI.